Reading from the N-terminus, the 260-residue chain is MAFVPPQAGYDRAITVFSPDGRLFQVQYAREAVKRGATAVGVKCKDGVVLAVEKRVTSKLIEPESYEKIFQIDDHIAAASSGIIADARVLVDRARLEAQIYRLTYGEPVPLTVLVKKICDLKQMHTQYGGVRPFGAALLMAGVNEKPELFETDPSGAYFEWKAVAIGSGRNTAMAIFEEKYRDEMTLEEAIKLAVLALSKIMEEPSPESIEVAVISVKEKKFKKITPEEVAKCLEEALKEVEAEEVPEKEEDYSELDSNY.

The interval 241-260 (VEAEEVPEKEEDYSELDSNY) is disordered. A compositionally biased stretch (acidic residues) spans 242–260 (EAEEVPEKEEDYSELDSNY).

This sequence belongs to the peptidase T1A family. In terms of assembly, the 20S proteasome core is composed of 14 alpha and 14 beta subunits that assemble into four stacked heptameric rings, resulting in a barrel-shaped structure. The two inner rings, each composed of seven catalytic beta subunits, are sandwiched by two outer rings, each composed of seven alpha subunits. The catalytic chamber with the active sites is on the inside of the barrel. Has a gated structure, the ends of the cylinder being occluded by the N-termini of the alpha-subunits. Is capped at one or both ends by the proteasome regulatory ATPase, PAN.

It is found in the cytoplasm. Its activity is regulated as follows. The formation of the proteasomal ATPase PAN-20S proteasome complex, via the docking of the C-termini of PAN into the intersubunit pockets in the alpha-rings, triggers opening of the gate for substrate entry. Interconversion between the open-gate and close-gate conformations leads to a dynamic regulation of the 20S proteasome proteolysis activity. Its function is as follows. Component of the proteasome core, a large protease complex with broad specificity involved in protein degradation. The chain is Proteasome subunit alpha from Thermococcus sibiricus (strain DSM 12597 / MM 739).